The chain runs to 332 residues: Phosphoribulokinase (332 aa).

This sequence belongs to the phosphoribulokinase family.

It catalyses the reaction D-ribulose 5-phosphate + ATP = D-ribulose 1,5-bisphosphate + ADP + H(+). Its pathway is carbohydrate biosynthesis; Calvin cycle. The chain is Phosphoribulokinase (prk) from Synechocystis sp. (strain ATCC 27184 / PCC 6803 / Kazusa).